The following is a 339-amino-acid chain: Phosphate acyltransferase (339 aa).

This sequence belongs to the PlsX family. As to quaternary structure, homodimer. Probably interacts with PlsY.

It is found in the cytoplasm. The enzyme catalyses a fatty acyl-[ACP] + phosphate = an acyl phosphate + holo-[ACP]. It participates in lipid metabolism; phospholipid metabolism. Catalyzes the reversible formation of acyl-phosphate (acyl-PO(4)) from acyl-[acyl-carrier-protein] (acyl-ACP). This enzyme utilizes acyl-ACP as fatty acyl donor, but not acyl-CoA. The polypeptide is Phosphate acyltransferase (Clostridium perfringens (strain SM101 / Type A)).